The chain runs to 270 residues: Transmembrane protein 176B (270 aa).

A run of 4 helical transmembrane segments spans residues 65–85 (LALG…GVCL), 95–115 (ASGC…GAIV), 127–147 (ISSL…VLCV), and 209–229 (LFLA…GVGL). Serine 236, serine 245, serine 254, and serine 258 each carry phosphoserine. Positions 237–270 (SQPLNEEGSEKRLLGENSVPPSPSREQTSTAIVL) are disordered. Over residues 260-270 (SREQTSTAIVL) the composition is skewed to polar residues.

Belongs to the TMEM176 family. Expressed in lung and dermal fibroblasts.

Its subcellular location is the nucleus membrane. Its function is as follows. May play a role in the process of maturation of dendritic cells. Required for the development of cerebellar granule cells. The protein is Transmembrane protein 176B (TMEM176B) of Homo sapiens (Human).